Consider the following 226-residue polypeptide: Leucyl/phenylalanyl-tRNA--protein transferase (226 aa).

Belongs to the L/F-transferase family.

The protein resides in the cytoplasm. The enzyme catalyses N-terminal L-lysyl-[protein] + L-leucyl-tRNA(Leu) = N-terminal L-leucyl-L-lysyl-[protein] + tRNA(Leu) + H(+). It carries out the reaction N-terminal L-arginyl-[protein] + L-leucyl-tRNA(Leu) = N-terminal L-leucyl-L-arginyl-[protein] + tRNA(Leu) + H(+). The catalysed reaction is L-phenylalanyl-tRNA(Phe) + an N-terminal L-alpha-aminoacyl-[protein] = an N-terminal L-phenylalanyl-L-alpha-aminoacyl-[protein] + tRNA(Phe). Its function is as follows. Functions in the N-end rule pathway of protein degradation where it conjugates Leu, Phe and, less efficiently, Met from aminoacyl-tRNAs to the N-termini of proteins containing an N-terminal arginine or lysine. The sequence is that of Leucyl/phenylalanyl-tRNA--protein transferase from Salinibacter ruber (strain DSM 13855 / M31).